Reading from the N-terminus, the 227-residue chain is Ribosomal RNA large subunit methyltransferase E (227 aa).

Residues glycine 78, tryptophan 80, aspartate 103, aspartate 119, and aspartate 143 each contribute to the S-adenosyl-L-methionine site. Lysine 183 functions as the Proton acceptor in the catalytic mechanism.

This sequence belongs to the class I-like SAM-binding methyltransferase superfamily. RNA methyltransferase RlmE family.

It is found in the cytoplasm. The enzyme catalyses uridine(2552) in 23S rRNA + S-adenosyl-L-methionine = 2'-O-methyluridine(2552) in 23S rRNA + S-adenosyl-L-homocysteine + H(+). Functionally, specifically methylates the uridine in position 2552 of 23S rRNA at the 2'-O position of the ribose in the fully assembled 50S ribosomal subunit. The chain is Ribosomal RNA large subunit methyltransferase E from Rickettsia canadensis (strain McKiel).